The chain runs to 99 residues: UPF0729 protein CG18508 (99 aa).

The tract at residues 60 to 99 (PGGKKTENVSDDDAEESENPPLNATAMAAETEVDESKKEI) is disordered. Acidic residues predominate over residues 68 to 77 (VSDDDAEESE). At serine 69 the chain carries Phosphoserine.

This sequence belongs to the UPF0729 family.

The polypeptide is UPF0729 protein CG18508 (Drosophila melanogaster (Fruit fly)).